Consider the following 597-residue polypeptide: Exochitinase 1 (597 aa).

The or 32 signal peptide spans 1–29; the sequence is MDRFRPLAVLIAAALTLSGTTALSSAARA. Residues 172–253 form the Fibronectin type-III domain; the sequence is PPTGLRTGSV…ATVTATTAPG (82 aa). Positions 264–597 constitute a GH18 domain; that stretch reads HALVGYLHAS…FQRTFDGYFG (334 aa). Glutamate 384 serves as the catalytic Proton donor.

Belongs to the glycosyl hydrolase 18 family. Chitinase class II subfamily. Post-translationally, the N-terminus is blocked.

The catalysed reaction is Random endo-hydrolysis of N-acetyl-beta-D-glucosaminide (1-&gt;4)-beta-linkages in chitin and chitodextrins.. Inhibited by the pseudosugar allosamidin A. Functionally, exochitinase that generates exclusively chitobiose from chitotetraose, chitohexaose, and colloidal high-molecular mass chitin. This is Exochitinase 1 (chi01) from Streptomyces olivaceoviridis (Streptomyces corchorusii).